A 216-amino-acid polypeptide reads, in one-letter code: Kynurenine formamidase (216 aa).

Residue W25 participates in substrate binding. Zn(2+) contacts are provided by H55, H59, and D61. Catalysis depends on H65, which acts as the Proton donor/acceptor. Residues H167 and E179 each coordinate Zn(2+).

Belongs to the Cyclase 1 superfamily. KynB family. In terms of assembly, homodimer. Zn(2+) is required as a cofactor.

It carries out the reaction N-formyl-L-kynurenine + H2O = L-kynurenine + formate + H(+). The protein operates within amino-acid degradation; L-tryptophan degradation via kynurenine pathway; L-kynurenine from L-tryptophan: step 2/2. In terms of biological role, catalyzes the hydrolysis of N-formyl-L-kynurenine to L-kynurenine, the second step in the kynurenine pathway of tryptophan degradation. The polypeptide is Kynurenine formamidase (Cupriavidus taiwanensis (strain DSM 17343 / BCRC 17206 / CCUG 44338 / CIP 107171 / LMG 19424 / R1) (Ralstonia taiwanensis (strain LMG 19424))).